Here is a 22-residue protein sequence, read N- to C-terminus: Magnificalysin II (22 aa).

Residues Ala3 to Ala12 are plays an important role in the hemolytic activity. Residues Gly11 to Val22 form an N-terminal region region.

This sequence belongs to the actinoporin family. Sea anemone subfamily. In terms of assembly, octamer or nonamer in membranes. Monomer in the soluble state.

It is found in the secreted. The protein resides in the nematocyst. The protein localises to the target cell membrane. In terms of biological role, pore-forming protein that forms cations-selective hydrophilic pores of around 1 nm and causes cytolysis. Pore formation is a multi-step process that involves specific recognition of membrane sphingomyelin (but neither cholesterol nor phosphatidylcholine) using aromatic rich region and adjacent phosphocholine (POC) binding site, firm binding to the membrane (mainly driven by hydrophobic interactions) accompanied by the transfer of the N-terminal region to the lipid-water interface and finally pore formation after oligomerization of monomers. This Heteractis magnifica (Magnificent sea anemone) protein is Magnificalysin II.